Reading from the N-terminus, the 493-residue chain is Endothelial lipase (493 aa).

The signal sequence occupies residues 1 to 23 (MRDPVFLLGFWSLYCCFPAGSLT). A disulfide bond links C66 and C79. 2 N-linked (GlcNAc...) asparagine glycosylation sites follow: N67 and N82. Catalysis depends on S171, which acts as the Nucleophile. D195 acts as the Charge relay system in catalysis. A disulfide bridge links C254 with C274. The active-site Charge relay system is the H276. Intrachain disulfides connect C299-C318 and C310-C313. 327–339 (KMRKKRNSKMYLK) is a binding site for heparin. The PLAT domain occupies 349 to 484 (YHYQLKVHMF…SPGQELWFYK (136 aa)). N-linked (GlcNAc...) asparagine glycosylation is present at N395. Residues C465 and C485 are joined by a disulfide bond.

It belongs to the AB hydrolase superfamily. Lipase family. Head to tail Homodimer. Interacts with apolipoprotein C-2.

The protein localises to the secreted. The enzyme catalyses a triacylglycerol + H2O = a diacylglycerol + a fatty acid + H(+). It carries out the reaction a 1,2-diacyl-sn-glycero-3-phosphocholine + H2O = a 2-acyl-sn-glycero-3-phosphocholine + a fatty acid + H(+). The catalysed reaction is 1,2,3-tri-(9Z-octadecenoyl)-glycerol + H2O = di-(9Z)-octadecenoylglycerol + (9Z)-octadecenoate + H(+). It catalyses the reaction 1,2,3-tributanoylglycerol + H2O = dibutanoylglycerol + butanoate + H(+). The enzyme catalyses 1,2-dihexadecanoyl-sn-glycero-3-phosphocholine + H2O = hexadecanoyl-sn-glycero-3-phosphocholine + hexadecanoate + H(+). Exerts both phospholipase and triglyceride lipase activities. More active as a phospholipase than a triglyceride lipase. Hydrolyzes triglycerides, both with short-chain fatty acyl groups (tributyrin) and long-chain fatty acyl groups (triolein) with similar levels of activity toward both types of substrates. Hydrolyzes high density lipoproteins (HDL) more efficiently than other lipoproteins. This is Endothelial lipase (Lipg) from Rattus norvegicus (Rat).